The following is a 447-amino-acid chain: Trichothecene C-3 esterase (447 aa).

The N-terminal stretch at 1-22 (MALNRLVFSLSLWLGFIGAAQA) is a signal peptide. N-linked (GlcNAc...) asparagine glycosylation is found at N59, N66, N136, and N189. Catalysis depends on S202, which acts as the Charge relay system. N-linked (GlcNAc...) asparagine glycans are attached at residues N238, N284, and N314. Residues D352 and H384 each act as charge relay system in the active site. Residues N389 and N423 are each glycosylated (N-linked (GlcNAc...) asparagine).

Belongs to the AB hydrolase superfamily. Lipase family.

The protein operates within sesquiterpene biosynthesis; trichothecene biosynthesis. Trichothecene C-3 esterase; part of the core gene cluster that mediates the biosynthesis of trichothecenes, a very large family of chemically related bicyclic sesquiterpene compounds acting as mycotoxins, including T2-toxin. The biosynthesis of trichothecenes begins with the cyclization of farnesyl diphosphate to trichodiene and is catalyzed by the trichodiene synthase TRI5. Trichodiene undergoes a series of oxygenations catalyzed by the cytochrome P450 monooxygenase TRI4. TRI4 controls the addition of four oxygens at C-2, C-3, C-11, and the C-12, C-13-epoxide to form the intermediate isotrichotriol. Isotrichotriol then undergoes a non-enzymatic isomerization and cyclization to form isotrichodermol. During this process, the oxygen at the C-2 position becomes the pyran ring oxygen and the hydroxyl group at C-11 is lost. More complex type A trichothecenes are built by modifying isotrichodermol through a series of paired hydroxylation and acetylation or acylation steps. Isotrichodermol is converted to isotrichodermin by the acetyltransferase TRI101. TRI101 encodes a C-3 transacetylase that acts as a self-protection or resistance factor during biosynthesis and that the presence of a free C-3 hydroxyl group is a key component of Fusarium trichothecene phytotoxicity. A second hydroxyl group is added to C-15 by the trichothecene C-15 hydroxylase TRI11, producing 15-decalonectrin, which is then acetylated by TRI3, producing calonectrin. A third hydroxyl group is added at C-4 by the cytochrome P450 monooxygenase TRI13, converting calonectrin to 3,15-diacetoxyspirpenol, which is subsequently acetylated by the acetyltransferase TRI7. A fourth hydroxyl group is added to C-8 by the cytochrome P450 monooxygenase TRI1, followed by the addition of an isovaleryl moiety by TRI16. Finally, the acetyl group is removed from the C-3 position by the trichothecene C-3 esterase TRI8 to produce T-2 toxin. The sequence is that of Trichothecene C-3 esterase from Fusarium sporotrichioides.